The sequence spans 130 residues: Modulator protein MzrA (130 aa).

Residues 1 to 15 (MIAAFIKRHAPQRRL) lie on the Cytoplasmic side of the membrane. A helical membrane pass occupies residues 16–36 (SLWLALPVVALLALVMMPALF). At 37-130 (RHDSALQIRA…RISFKPQSIG (94 aa)) the chain is on the periplasmic side.

The protein belongs to the MzrA family. In terms of assembly, interacts with EnvZ.

It localises to the cell inner membrane. Modulates the activity of the EnvZ/OmpR two-component regulatory system, probably by directly modulating EnvZ enzymatic activity and increasing stability of phosphorylated OmpR. In Erwinia tasmaniensis (strain DSM 17950 / CFBP 7177 / CIP 109463 / NCPPB 4357 / Et1/99), this protein is Modulator protein MzrA.